The primary structure comprises 212 residues: MEVLRRSSVFAAEIMDAFDRSPTDKELVAQAKALGREYVHARLLRAGLSWSAPERAAPVPGRLAEVCAVLLRLGDELEMIRPSVYRNVARQLHISLQSEPVVTDAFLAVAGHIFSAGITWGKVVSLYAVAAGLAVDCVRQAQPAMVHALVDCLGEFVRKTLATWLRRRGGWTDVLKCVVSTDPGLRSHWLVAALCSFGRFLKAAFFVLLPER.

Serine 7 carries the post-translational modification Phosphoserine. The interval methionine 15 to arginine 45 is interactions with ITPR1. Glycyl lysine isopeptide (Lys-Gly) (interchain with G-Cter in ubiquitin) cross-links involve residues lysine 25 and lysine 32. The BH4 signature appears at lysine 32–leucine 44. The BH3 signature appears at valine 66–proline 82. Positions leucine 70–glutamate 78 are nuclear export signal. The BH1 signature appears at histidine 112–alanine 131. Residues lysine 159 and lysine 176 each participate in a glycyl lysine isopeptide (Lys-Gly) (interchain with G-Cter in ubiquitin) cross-link. Residues tryptophan 164–valine 178 carry the BH2 motif. The helical transmembrane segment at tryptophan 189–leucine 209 threads the bilayer.

This sequence belongs to the Bcl-2 family. As to quaternary structure, monomer; positively regulates apoptotic process. Homodimer. Heterodimer. Oligomer; promoted by apoptotic stimuli and BH3-only proteins; mediates constitutive activation. Interacts (via BH4 domain) with ITPR1; enhances BOK expression and stabilization; limits apoptosis and prevents ubiquitination and then degradation; protects ITPR1 from proteolysis by CASP3 during apoptosis. Interacts with ITPR2 and ITPR3; binds most strongly to ITPR2, and barely to ITPR3; regulates their expression. Interacts with XPO1; translocates to the cytoplasm. Interacts with BNIP3; promotes oligomerization. In terms of processing, ubiquitinated by AMFR/gp78 E3 ubiquitin ligase complex; mediates degradation by ubiquitin-proteasome pathway in a VCP/p97-dependent manner; prevents from pro-apoptotic activity; promotes degradation of newly synthesized proteins that are not ITPR1 associated. Expressed mainly in oocytes; weak expression in granulosa cells of the developing follicles. In adult human ovaries, expressed in granulosa cells at all follicular stages, but expression in primordial/primary follicles granulosa cell is stronger than in secondary and antral follicles.

It is found in the mitochondrion membrane. The protein resides in the endoplasmic reticulum membrane. The protein localises to the mitochondrion inner membrane. Its subcellular location is the cytoplasm. It localises to the nucleus. It is found in the mitochondrion. The protein resides in the endoplasmic reticulum. The protein localises to the mitochondrion outer membrane. Its subcellular location is the early endosome membrane. It localises to the recycling endosome membrane. It is found in the nucleus outer membrane. The protein resides in the golgi apparatus. The protein localises to the cis-Golgi network membrane. Its subcellular location is the trans-Golgi network membrane. It localises to the membrane. Apoptosis regulator that functions through different apoptotic signaling pathways. Plays a roles as pro-apoptotic protein that positively regulates intrinsic apoptotic process in a BAX- and BAK1-dependent manner or in a BAX- and BAK1-independent manner. In response to endoplasmic reticulum stress promotes mitochondrial apoptosis through downstream BAX/BAK1 activation and positive regulation of PERK-mediated unfolded protein response. Activates apoptosis independently of heterodimerization with survival-promoting BCL2 and BCL2L1 through induction of mitochondrial outer membrane permeabilization, in a BAX- and BAK1-independent manner, in response to inhibition of ERAD-proteasome degradation system, resulting in cytochrome c release. In response to DNA damage, mediates intrinsic apoptotic process in a TP53-dependent manner. Plays a role in granulosa cell apoptosis by CASP3 activation. Plays a roles as anti-apoptotic protein during neuronal apoptotic process, by negatively regulating poly ADP-ribose polymerase-dependent cell death through regulation of neuronal calcium homeostasis and mitochondrial bioenergetics in response to NMDA excitation. In addition to its role in apoptosis, may regulate trophoblast cell proliferation during the early stages of placental development, by acting on G1/S transition through regulation of CCNE1 expression. May also play a role as an inducer of autophagy by disrupting interaction between MCL1 and BECN1. In terms of biological role, pro-apoptotic molecule exerting its function through the mitochondrial pathway. The sequence is that of Bcl-2-related ovarian killer protein from Homo sapiens (Human).